The chain runs to 159 residues: 3-hydroxyacyl-[acyl-carrier-protein] dehydratase FabZ (159 aa).

Histidine 58 is an active-site residue.

The protein belongs to the thioester dehydratase family. FabZ subfamily.

It localises to the cytoplasm. It carries out the reaction a (3R)-hydroxyacyl-[ACP] = a (2E)-enoyl-[ACP] + H2O. Involved in unsaturated fatty acids biosynthesis. Catalyzes the dehydration of short chain beta-hydroxyacyl-ACPs and long chain saturated and unsaturated beta-hydroxyacyl-ACPs. The protein is 3-hydroxyacyl-[acyl-carrier-protein] dehydratase FabZ of Helicobacter pylori (strain ATCC 700392 / 26695) (Campylobacter pylori).